We begin with the raw amino-acid sequence, 248 residues long: MRLIQNMCTITEYPPATNTDCGSSSSAGTASSRVIKIAVVGGSGVGKTALVVRFLTKRFIGDYERNAGNLYSRQVQIDGTNLAIQVQDTPGVQINEQNLESNEQLNKSLRWADAVVIVFSITDCKSFDLISHLHRHARQLHPDNRIPIVIVANKADLLHLKQVEPQHGLQLANMLGCTFYEVSVSENYNDVYNAFQVLCKEISKQQNTGTSERRKNSIIPRPKSPNMQDLKRRFKQALSSKVRTATSV.

The segment at 30–248 (ASSRVIKIAV…SSKVRTATSV (219 aa)) is small GTPase-like. GTP is bound by residues 41 to 48 (GGSGVGKT), 88 to 99 (DTPGVQINEQNL), and 153 to 156 (NKAD). Residues 206–228 (QNTGTSERRKNSIIPRPKSPNMQ) are disordered.

Belongs to the small GTPase superfamily. Ras family.

It carries out the reaction GTP + H2O = GDP + phosphate + H(+). In Xenopus laevis (African clawed frog), this protein is Ras-like protein family member 11B.